The sequence spans 305 residues: tRNA pseudouridine synthase B (305 aa).

Asp48 functions as the Nucleophile in the catalytic mechanism.

The protein belongs to the pseudouridine synthase TruB family. Type 1 subfamily.

It catalyses the reaction uridine(55) in tRNA = pseudouridine(55) in tRNA. In terms of biological role, responsible for synthesis of pseudouridine from uracil-55 in the psi GC loop of transfer RNAs. This chain is tRNA pseudouridine synthase B, found in Stutzerimonas stutzeri (strain A1501) (Pseudomonas stutzeri).